The primary structure comprises 499 residues: Glycerol kinase (499 aa).

Thr17 is an ADP binding site. ATP contacts are provided by Thr17, Thr18, and Ser19. Thr17 is a binding site for sn-glycerol 3-phosphate. Arg21 contributes to the ADP binding site. Sn-glycerol 3-phosphate is bound by residues Arg87, Glu88, Tyr139, and Asp243. Glycerol is bound by residues Arg87, Glu88, Tyr139, Asp243, and Gln244. ADP is bound by residues Thr265 and Gly308. ATP contacts are provided by Thr265, Gly308, Gln312, and Gly409. ADP contacts are provided by Gly409 and Asn413.

The protein belongs to the FGGY kinase family.

It catalyses the reaction glycerol + ATP = sn-glycerol 3-phosphate + ADP + H(+). Its pathway is polyol metabolism; glycerol degradation via glycerol kinase pathway; sn-glycerol 3-phosphate from glycerol: step 1/1. With respect to regulation, inhibited by fructose 1,6-bisphosphate (FBP). Functionally, key enzyme in the regulation of glycerol uptake and metabolism. Catalyzes the phosphorylation of glycerol to yield sn-glycerol 3-phosphate. The polypeptide is Glycerol kinase (Pseudomonas putida (strain ATCC 700007 / DSM 6899 / JCM 31910 / BCRC 17059 / LMG 24140 / F1)).